A 305-amino-acid chain; its full sequence is Elongation factor Ts (305 aa).

An involved in Mg(2+) ion dislocation from EF-Tu region spans residues 79 to 82 (TDFV).

The protein belongs to the EF-Ts family.

It is found in the cytoplasm. Functionally, associates with the EF-Tu.GDP complex and induces the exchange of GDP to GTP. It remains bound to the aminoacyl-tRNA.EF-Tu.GTP complex up to the GTP hydrolysis stage on the ribosome. The sequence is that of Elongation factor Ts from Brucella anthropi (strain ATCC 49188 / DSM 6882 / CCUG 24695 / JCM 21032 / LMG 3331 / NBRC 15819 / NCTC 12168 / Alc 37) (Ochrobactrum anthropi).